Reading from the N-terminus, the 162-residue chain is MIIKVQKTFEKRLINAFMRKGNYIKAEKIYLKVVNRLSTIGIKNSYQFIRETLLKMTPIMGVVKKKRGVKELIYPKYLEPEMGEKLAIKWLKKTVAKFKGELLIENIVEEFVKASKDQGEVVKEKWALYKEVRYAISCNTRKGHHKSFVEQKLKATQRRKWY.

Belongs to the universal ribosomal protein uS7 family. In terms of assembly, part of the small ribosomal subunit.

It is found in the mitochondrion. Functionally, one of the primary rRNA binding proteins, it binds directly to 16S-like rRNA where it nucleates assembly of the head domain of the small subunit. The chain is Small ribosomal subunit protein uS7m (mrps7) from Dictyostelium discoideum (Social amoeba).